The chain runs to 186 residues: Protein GrpE (186 aa).

Positions 1–15 (MADEQQTLDQQTPEQ) are enriched in polar residues. The segment at 1 to 20 (MADEQQTLDQQTPEQPTGAA) is disordered.

The protein belongs to the GrpE family. As to quaternary structure, homodimer.

The protein resides in the cytoplasm. In terms of biological role, participates actively in the response to hyperosmotic and heat shock by preventing the aggregation of stress-denatured proteins, in association with DnaK and GrpE. It is the nucleotide exchange factor for DnaK and may function as a thermosensor. Unfolded proteins bind initially to DnaJ; upon interaction with the DnaJ-bound protein, DnaK hydrolyzes its bound ATP, resulting in the formation of a stable complex. GrpE releases ADP from DnaK; ATP binding to DnaK triggers the release of the substrate protein, thus completing the reaction cycle. Several rounds of ATP-dependent interactions between DnaJ, DnaK and GrpE are required for fully efficient folding. The sequence is that of Protein GrpE from Pseudomonas aeruginosa (strain LESB58).